The chain runs to 745 residues: Kinesin-like protein KIN-14M (745 aa).

Residues 1-31 are disordered; the sequence is MVGEMTNNGRIRPSFPVKDLTSNEGSEYGGP. Positions 1–35 are globular; it reads MVGEMTNNGRIRPSFPVKDLTSNEGSEYGGPVEFT. Microtubule-binding regions lie at residues 65–77 and 198–745; these read YVKR…RWFQ and SLQL…LSLG. Coiled-coil stretches lie at residues 76–223 and 259–389; these read FQEL…GEKE and KDEL…GNIR. The 338-residue stretch at 387–724 folds into the Kinesin motor domain; sequence NIRVFCRVRP…LRFAARVNAC (338 aa). 472-479 lines the ATP pocket; that stretch reads GQTGSGKT.

The protein belongs to the TRAFAC class myosin-kinesin ATPase superfamily. Kinesin family. KIN-14 subfamily. As to quaternary structure, bind to microtubules in an ATP-insensitive manner (in vitro). Homodimer and heterodimer with KIN14N/KATC (in vitro).

The protein localises to the cytoplasm. The protein resides in the cytoskeleton. This Arabidopsis thaliana (Mouse-ear cress) protein is Kinesin-like protein KIN-14M.